A 438-amino-acid chain; its full sequence is V-type ATP synthase beta chain (438 aa).

Belongs to the ATPase alpha/beta chains family.

Functionally, produces ATP from ADP in the presence of a proton gradient across the membrane. The V-type beta chain is a regulatory subunit. In Chlamydia felis (strain Fe/C-56) (Chlamydophila felis), this protein is V-type ATP synthase beta chain.